The following is a 556-amino-acid chain: Formate--tetrahydrofolate ligase (556 aa).

Residue 65-72 coordinates ATP; sequence TPAGEGKS.

It belongs to the formate--tetrahydrofolate ligase family.

It catalyses the reaction (6S)-5,6,7,8-tetrahydrofolate + formate + ATP = (6R)-10-formyltetrahydrofolate + ADP + phosphate. It functions in the pathway one-carbon metabolism; tetrahydrofolate interconversion. The protein is Formate--tetrahydrofolate ligase of Natranaerobius thermophilus (strain ATCC BAA-1301 / DSM 18059 / JW/NM-WN-LF).